The chain runs to 364 residues: Putative glutamate--cysteine ligase 2-2 (364 aa).

It belongs to the glutamate--cysteine ligase type 2 family. YbdK subfamily.

The enzyme catalyses L-cysteine + L-glutamate + ATP = gamma-L-glutamyl-L-cysteine + ADP + phosphate + H(+). Functionally, ATP-dependent carboxylate-amine ligase which exhibits weak glutamate--cysteine ligase activity. The chain is Putative glutamate--cysteine ligase 2-2 from Mycobacterium sp. (strain JLS).